Reading from the N-terminus, the 427-residue chain is Cyclin-L1-1 (427 aa).

A disordered region spans residues 258 to 427; the sequence is HRRTSDTNAS…SRDKDRHRRQ (170 aa). The span at 263–276 shows a compositional bias: polar residues; sequence DTNASKESPATTVA. Composition is skewed to basic and acidic residues over residues 289 to 311, 328 to 382, 390 to 400, and 407 to 421; these read QEKDALIKAGSDKVKEKGDDDGK, KSEK…DRDR, DRSSGYSDKEK, and RDRGDHYSSHSSRDK.

The protein belongs to the cyclin family. Cyclin L subfamily.

This chain is Cyclin-L1-1 (CYCL1-1), found in Oryza sativa subsp. japonica (Rice).